Consider the following 476-residue polypeptide: Probable coniferyl aldehyde dehydrogenase (476 aa).

Residues E225 and C259 contribute to the active site.

The protein belongs to the aldehyde dehydrogenase family. In terms of assembly, homodimer.

The enzyme catalyses (E)-coniferaldehyde + NADP(+) + H2O = (E)-ferulate + NADPH + 2 H(+). It carries out the reaction (E)-coniferaldehyde + NAD(+) + H2O = (E)-ferulate + NADH + 2 H(+). This chain is Probable coniferyl aldehyde dehydrogenase (calB), found in Pseudomonas aeruginosa (strain ATCC 15692 / DSM 22644 / CIP 104116 / JCM 14847 / LMG 12228 / 1C / PRS 101 / PAO1).